Here is a 377-residue protein sequence, read N- to C-terminus: Spermidine/putrescine import ATP-binding protein PotA (377 aa).

Positions 18–248 constitute an ABC transporter domain; it reads IRLSGISKSF…PKNLFVARFI (231 aa). 50 to 57 contributes to the ATP binding site; the sequence is GPSGCGKT.

This sequence belongs to the ABC transporter superfamily. Spermidine/putrescine importer (TC 3.A.1.11.1) family. In terms of assembly, the complex is composed of two ATP-binding proteins (PotA), two transmembrane proteins (PotB and PotC) and a solute-binding protein (PotD).

It is found in the cell inner membrane. It carries out the reaction ATP + H2O + polyamine-[polyamine-binding protein]Side 1 = ADP + phosphate + polyamineSide 2 + [polyamine-binding protein]Side 1.. In terms of biological role, part of the ABC transporter complex PotABCD involved in spermidine/putrescine import. Responsible for energy coupling to the transport system. This chain is Spermidine/putrescine import ATP-binding protein PotA, found in Vibrio parahaemolyticus serotype O3:K6 (strain RIMD 2210633).